Reading from the N-terminus, the 331-residue chain is D-alanine--D-alanine ligase (331 aa).

An ATP-grasp domain is found at 116–316; the sequence is KRLWQTHSLP…YEDFVLQLAA (201 aa). 142 to 197 provides a ligand contact to ATP; it reads ADRLGLPLIVKPAREGSSIGLTKVTSVAELPAAYEKAARLDRDVMAEQFIDGDELT. Asp269, Glu283, and Asn285 together coordinate Mg(2+).

This sequence belongs to the D-alanine--D-alanine ligase family. Mg(2+) is required as a cofactor. It depends on Mn(2+) as a cofactor.

It is found in the cytoplasm. It carries out the reaction 2 D-alanine + ATP = D-alanyl-D-alanine + ADP + phosphate + H(+). The protein operates within cell wall biogenesis; peptidoglycan biosynthesis. In terms of biological role, cell wall formation. The chain is D-alanine--D-alanine ligase from Ralstonia nicotianae (strain ATCC BAA-1114 / GMI1000) (Ralstonia solanacearum).